The chain runs to 245 residues: Orotidine 5'-phosphate decarboxylase (245 aa).

Substrate-binding positions include D22, K44, 71–80 (DLKFHDIPNT), T131, R192, Q201, G221, and R222. K73 (proton donor) is an active-site residue.

The protein belongs to the OMP decarboxylase family. Type 1 subfamily. In terms of assembly, homodimer.

It catalyses the reaction orotidine 5'-phosphate + H(+) = UMP + CO2. Its pathway is pyrimidine metabolism; UMP biosynthesis via de novo pathway; UMP from orotate: step 2/2. Functionally, catalyzes the decarboxylation of orotidine 5'-monophosphate (OMP) to uridine 5'-monophosphate (UMP). The chain is Orotidine 5'-phosphate decarboxylase from Yersinia pestis bv. Antiqua (strain Antiqua).